A 314-amino-acid chain; its full sequence is DNA-directed RNA polymerase subunit alpha (314 aa).

An alpha N-terminal domain (alpha-NTD) region spans residues 1 to 227 (MIEFQKPTIS…EHLALFIDLS (227 aa)). The interval 241 to 314 (VETVMENKEP…GQSFKQETEN (74 aa)) is alpha C-terminal domain (alpha-CTD).

This sequence belongs to the RNA polymerase alpha chain family. Homodimer. The RNAP catalytic core consists of 2 alpha, 1 beta, 1 beta' and 1 omega subunit. When a sigma factor is associated with the core the holoenzyme is formed, which can initiate transcription.

It carries out the reaction RNA(n) + a ribonucleoside 5'-triphosphate = RNA(n+1) + diphosphate. Functionally, DNA-dependent RNA polymerase catalyzes the transcription of DNA into RNA using the four ribonucleoside triphosphates as substrates. This Oenococcus oeni (strain ATCC BAA-331 / PSU-1) protein is DNA-directed RNA polymerase subunit alpha.